We begin with the raw amino-acid sequence, 505 residues long: ATP synthase subunit alpha (505 aa).

169 to 176 (GDRQTGKT) provides a ligand contact to ATP.

Belongs to the ATPase alpha/beta chains family. As to quaternary structure, F-type ATPases have 2 components, CF(1) - the catalytic core - and CF(0) - the membrane proton channel. CF(1) has five subunits: alpha(3), beta(3), gamma(1), delta(1), epsilon(1). CF(0) has three main subunits: a(1), b(2) and c(9-12). The alpha and beta chains form an alternating ring which encloses part of the gamma chain. CF(1) is attached to CF(0) by a central stalk formed by the gamma and epsilon chains, while a peripheral stalk is formed by the delta and b chains.

The protein localises to the cell membrane. The enzyme catalyses ATP + H2O + 4 H(+)(in) = ADP + phosphate + 5 H(+)(out). In terms of biological role, produces ATP from ADP in the presence of a proton gradient across the membrane. The alpha chain is a regulatory subunit. This is ATP synthase subunit alpha from Alkaliphilus metalliredigens (strain QYMF).